Here is a 110-residue protein sequence, read N- to C-terminus: Iron-sulfur cluster assembly protein CyaY (110 aa).

It belongs to the frataxin family.

Involved in iron-sulfur (Fe-S) cluster assembly. May act as a regulator of Fe-S biogenesis. This chain is Iron-sulfur cluster assembly protein CyaY, found in Pseudomonas syringae pv. syringae (strain B728a).